Here is a 341-residue protein sequence, read N- to C-terminus: MRLRRIKTLIVDDSLLFRETLARGISRDPAIEVVATAVDAFMARDMIIKYKPDVMTLDVEMPRMSGIEFLRRLMPQYPLPVVMISALSESVFDALNAGAIDFVAKPDMNRNRDLDSFFSELILKIKIASVARLGRRAEVSKLLPTGKSQADQGWVIAIGASTGGPEAIYQIVKNFNQDTPGTVIVQHMPAGFTRMYAERLNDTCVVEVKEAQNNDQVKMGQVLIAPGEYQMRLKQKAGNYMVECHPGEKVNGHCPAVDVLFDSVAQSAGARAVGIILTGMGSDGARGLLAMRKAGARTIGQDEASCVVYGMPKVAYELGAVEKQYPLNYIGQALYKLINQL.

The Response regulatory domain occupies 7–120 (KTLIVDDSLL…NRDLDSFFSE (114 aa)). The residue at position 58 (Asp-58) is a 4-aspartylphosphate. In terms of domain architecture, CheB-type methylesterase spans 155-341 (VIAIGASTGG…QALYKLINQL (187 aa)). Active-site residues include Ser-161, His-187, and Asp-283.

It belongs to the CheB family. In terms of processing, phosphorylated by CheA. Phosphorylation of the N-terminal regulatory domain activates the methylesterase activity.

The protein resides in the cytoplasm. The enzyme catalyses [protein]-L-glutamate 5-O-methyl ester + H2O = L-glutamyl-[protein] + methanol + H(+). The catalysed reaction is L-glutaminyl-[protein] + H2O = L-glutamyl-[protein] + NH4(+). In terms of biological role, involved in chemotaxis. Part of a chemotaxis signal transduction system that modulates chemotaxis in response to various stimuli. Catalyzes the demethylation of specific methylglutamate residues introduced into the chemoreceptors (methyl-accepting chemotaxis proteins or MCP) by CheR. Also mediates the irreversible deamidation of specific glutamine residues to glutamic acid. This is Protein-glutamate methylesterase/protein-glutamine glutaminase 2 from Syntrophomonas wolfei subsp. wolfei (strain DSM 2245B / Goettingen).